The following is a 109-amino-acid chain: Putative polyketide cyclase (109 aa).

This sequence to polyketide cyclases.

Functionally, involved in developmentally regulated synthesis of a compound biosynthetically related to polyketide antibiotics which is essential for spore color in Streptomyces halstedii. The polypeptide is Putative polyketide cyclase (sch4) (Streptomyces halstedii).